The sequence spans 83 residues: Putative membrane protein insertion efficiency factor (83 aa).

The protein belongs to the UPF0161 family.

It is found in the cell membrane. Its function is as follows. Could be involved in insertion of integral membrane proteins into the membrane. The protein is Putative membrane protein insertion efficiency factor of Streptococcus thermophilus (strain ATCC BAA-250 / LMG 18311).